Here is a 60-residue protein sequence, read N- to C-terminus: MAVPKRKKSKSRRNMHRSHHAIKPKNIVVCATTGEFMLPHNIAVDNSYKGKRVFIKQKAE.

The tract at residues 1–23 (MAVPKRKKSKSRRNMHRSHHAIK) is disordered.

It belongs to the bacterial ribosomal protein bL32 family.

This chain is Large ribosomal subunit protein bL32, found in Wolbachia pipientis subsp. Culex pipiens (strain wPip).